The chain runs to 250 residues: Probable transcriptional regulatory protein Mmc1_0479 (250 aa).

The protein belongs to the TACO1 family.

Its subcellular location is the cytoplasm. This is Probable transcriptional regulatory protein Mmc1_0479 from Magnetococcus marinus (strain ATCC BAA-1437 / JCM 17883 / MC-1).